A 469-amino-acid chain; its full sequence is MQRGIVWVVDDDSSIRWVLERALAGAGLTCTTFENGAEVLEALASKTPDVLLSDIRMPGMDGLALLKQIKQRHPMLPVIIMTAHSDLDAAVSAYQQGAFDYLPKPFDIDEAVALVERAISHYQEQQQPRNVQLNGPTTDIIGEAPAMQDVFRIIGRLSRSSISVLINGESGTGKELVAHALHRHSPRAKAPFIALNMAAIPKDLIESELFGHEKGAFTGANTIRQGRFEQADGGTLFLDEIGDMPLDVQTRLLRVLADGQFYRVGGYAPVKVDVRIIAATHQNLEQRVQEGKFREDLFHRLNVIRVHLPPLRERREDIPRLARHFLQVAARELGVEAKLLHPETEAALTRLAWPGNVRQLENTCRWLTVMAAGQEVLIQDLPGELFESTVAESTSQMQPDSWATLLAQWADRALRSGHQNLLSEAQPELERTLLTTALRHTQGHKQEAARLLGWGRNTLTRKLKELGME.

The Response regulatory domain occupies 5–119; sequence IVWVVDDDSS…EAVALVERAI (115 aa). The residue at position 54 (aspartate 54) is a 4-aspartylphosphate. The Sigma-54 factor interaction domain maps to 140-369; it reads IIGEAPAMQD…LENTCRWLTV (230 aa). ATP contacts are provided by residues 168 to 175 and 231 to 240; these read GESGTGKE and ADGGTLFLDE. Positions 445–464 form a DNA-binding region, H-T-H motif; sequence KQEAARLLGWGRNTLTRKLK.

Post-translationally, phosphorylated and dephosphorylated by NtrB.

It localises to the cytoplasm. Member of the two-component regulatory system NtrB/NtrC, which controls expression of the nitrogen-regulated (ntr) genes in response to nitrogen limitation. Phosphorylated NtrC binds directly to DNA and stimulates the formation of open promoter-sigma54-RNA polymerase complexes. The protein is DNA-binding transcriptional regulator NtrC (glnG) of Escherichia coli O157:H7.